The primary structure comprises 111 residues: ATP-dependent Clp protease adapter protein ClpS (111 aa).

It belongs to the ClpS family. As to quaternary structure, binds to the N-terminal domain of the chaperone ClpA.

Functionally, involved in the modulation of the specificity of the ClpAP-mediated ATP-dependent protein degradation. The protein is ATP-dependent Clp protease adapter protein ClpS of Legionella pneumophila (strain Paris).